Reading from the N-terminus, the 258-residue chain is MKNITFIFFILLASPLYANGDKLYRADSRPPDEIKRSGGLMPRGHNEYFDRGTQMNINLYDHARGTQTGFVRYDDGYVSTSLSLRSAHLAGQSILSGYSTYYIYVIATAPNMFNVNDVLGVYSPHPYEQEVSALGGIPYSQIYGWYRVNFGVIDERLHRNREYRDRYYRNLNIAPAEDGYRLAGFPPDHQAWREEPWIHHAPQGCGNSSRTITGDTCNEETQNLSTIYLRKYQSKVKRQIFSDYQSEVDIYNRIRNEL.

The signal sequence occupies residues 1–18 (MKNITFIFFILLASPLYA). Residue 25–39 (RADSRPPDEIKRSGG) participates in NAD(+) binding. Residue Glu128 is part of the active site. Cys205 and Cys217 are disulfide-bonded.

Belongs to the enterotoxin A family. In terms of assembly, heterohexamer of one A chain and of five B chains.

The biological activity of the toxin is produced by the A chain, which activates intracellular adenyl cyclase. The protein is Heat-labile enterotoxin A chain (eltA) of Escherichia coli O78:H11 (strain H10407 / ETEC).